The primary structure comprises 115 residues: Non-specific lipid-transfer protein Cor a 8.0101 (115 aa).

A signal peptide spans 1 to 23; that stretch reads MGSLKLVCAVLLCMMVAAPVARA. Disulfide bonds link Cys27–Cys74, Cys37–Cys51, Cys52–Cys97, and Cys72–Cys111.

The protein belongs to the plant LTP family. Monomer. Expressed in seed (at protein level). Expressed in seed.

Its function is as follows. Plant non-specific lipid-transfer proteins transfer phospholipids as well as galactolipids across membranes. May play a role in wax or cutin deposition in the cell walls of expanding epidermal cells and certain secretory tissues. In Corylus avellana (European hazel), this protein is Non-specific lipid-transfer protein Cor a 8.0101.